The following is a 210-amino-acid chain: Cell division protein FtsQ (210 aa).

One can recognise a POTRA domain in the interval 1–58 (LQTSEIEVFQLLGLDGSTSLIALDIDAARRKLVQLPWVEDVDIRKVYPKTVEVRLKER). A helical membrane pass occupies residues 8-25 (VFQLLGLDGSTSLIALDI).

It belongs to the FtsQ/DivIB family. FtsQ subfamily.

It localises to the cell inner membrane. Its function is as follows. Essential cell division protein. The protein is Cell division protein FtsQ of Rhizobium radiobacter (Agrobacterium tumefaciens).